The following is a 235-amino-acid chain: 15,16-dihydrobiliverdin:ferredoxin oxidoreductase (235 aa).

The protein belongs to the HY2 family.

It carries out the reaction 15,16-dihydrobiliverdin + oxidized 2[4Fe-4S]-[ferredoxin] = biliverdin IXalpha + reduced 2[4Fe-4S]-[ferredoxin] + 2 H(+). Its function is as follows. Catalyzes the two-electron reduction of biliverdin IX-alpha at the C15 methine bridge. This Parasynechococcus marenigrum (strain WH8102) protein is 15,16-dihydrobiliverdin:ferredoxin oxidoreductase (pebA).